Consider the following 239-residue polypeptide: Peptidyl-tRNA hydrolase (239 aa).

Tyr-14 is a tRNA binding site. His-19 serves as the catalytic Proton acceptor. 3 residues coordinate tRNA: Phe-64, Asn-66, and Asn-112. The segment at Ala-188–Arg-239 is disordered. Positions Lys-198–Arg-239 are enriched in basic and acidic residues.

It belongs to the PTH family. As to quaternary structure, monomer.

The protein localises to the cytoplasm. It carries out the reaction an N-acyl-L-alpha-aminoacyl-tRNA + H2O = an N-acyl-L-amino acid + a tRNA + H(+). Its function is as follows. Hydrolyzes ribosome-free peptidyl-tRNAs (with 1 or more amino acids incorporated), which drop off the ribosome during protein synthesis, or as a result of ribosome stalling. Functionally, catalyzes the release of premature peptidyl moieties from peptidyl-tRNA molecules trapped in stalled 50S ribosomal subunits, and thus maintains levels of free tRNAs and 50S ribosomes. The protein is Peptidyl-tRNA hydrolase of Jannaschia sp. (strain CCS1).